Reading from the N-terminus, the 321-residue chain is MIDFRPFYQQIATTNLSDWLETLPLQLKEWETQTHGDYAKWSKIVDFLSDLHADEIDLKSAVKSDRTSPLSEGEKQRIIHHLKQLMPWRKGPYHLFGIHVDCEWRSDFKWDRVLPHLSPLQGRTILDVGCGSGYHMWRMVGEGAKMVVGIDPTELFLCQFEAVRKLLNNDRRANLIPLGIEQMQPLAAFDTVFSMGVLYHRKSPLDHLSQLKNQLVKGGELVLETLVVDGDVNTVLIPADRYAKMKNVYFIPSVAALINWLEKVGFTNVRCVDVATTTLEEQRKTDWLENESLIDFLDPNDHSKTIEGYQAPKRAVILANK.

Carboxy-S-adenosyl-L-methionine-binding positions include K90, W104, K109, G129, 151–153 (DPT), 180–181 (IE), M195, Y199, and R314.

Belongs to the class I-like SAM-binding methyltransferase superfamily. CmoB family. Homotetramer.

It carries out the reaction carboxy-S-adenosyl-L-methionine + 5-hydroxyuridine(34) in tRNA = 5-carboxymethoxyuridine(34) in tRNA + S-adenosyl-L-homocysteine + H(+). Functionally, catalyzes carboxymethyl transfer from carboxy-S-adenosyl-L-methionine (Cx-SAM) to 5-hydroxyuridine (ho5U) to form 5-carboxymethoxyuridine (cmo5U) at position 34 in tRNAs. In Haemophilus influenzae (strain PittEE), this protein is tRNA U34 carboxymethyltransferase.